The primary structure comprises 120 residues: Glycine cleavage system H protein (120 aa).

The region spanning 19–101 (DGTVGISDFA…YTDGWLFRLD (83 aa)) is the Lipoyl-binding domain. An N6-lipoyllysine modification is found at lysine 60.

The protein belongs to the GcvH family. In terms of assembly, the glycine cleavage system is composed of four proteins: P, T, L and H. The cofactor is (R)-lipoate.

The glycine cleavage system catalyzes the degradation of glycine. The H protein shuttles the methylamine group of glycine from the P protein to the T protein. The polypeptide is Glycine cleavage system H protein (Deinococcus geothermalis (strain DSM 11300 / CIP 105573 / AG-3a)).